The primary structure comprises 723 residues: Threonine--tRNA ligase, mitochondrial (723 aa).

At Ser-57 the chain carries Phosphoserine. Residues 64-126 enclose the TGS domain; sequence RAIKISLPEG…ETDCHLRFLT (63 aa).

Belongs to the class-II aminoacyl-tRNA synthetase family. Homodimer.

It is found in the mitochondrion matrix. The catalysed reaction is tRNA(Thr) + L-threonine + ATP = L-threonyl-tRNA(Thr) + AMP + diphosphate + H(+). Its function is as follows. Catalyzes the attachment of threonine to tRNA(Thr) in a two-step reaction: threonine is first activated by ATP to form Thr-AMP and then transferred to the acceptor end of tRNA(Thr). Also edits incorrectly charged tRNA(Thr) via its editing domain. This Mus musculus (Mouse) protein is Threonine--tRNA ligase, mitochondrial (Tars2).